Reading from the N-terminus, the 606-residue chain is Atypical protein kinase C (606 aa).

Positions 30–113 constitute a PB1 domain; sequence SITVKTAYNG…SQLVIHVFPN (84 aa). The segment at 145–195 adopts a Phorbol-ester/DAG-type zinc-finger fold; the sequence is GHIFQAKRFNRRAFCAYCQDRIWGLGRQGFKCIQCKLLVHKKCHKLVQKHC. The 269-residue stretch at 264–532 folds into the Protein kinase domain; it reads FELIRVIGRG…FMDIVSHPFF (269 aa). ATP is bound by residues 270-278 and lysine 293; that span reads IGRGSYAKV. The active-site Proton acceptor is the aspartate 388. One can recognise an AGC-kinase C-terminal domain in the interval 533 to 604; that stretch reads KNMDWELLER…VNPLLMSLED (72 aa).

It belongs to the protein kinase superfamily. AGC Ser/Thr protein kinase family. PKC subfamily. Interacts with baz; the interaction is required for apical localization of aPKC in neuroblasts and epithelial cells. Interacts with Dap160; the interaction promotes aPKC apical localization and kinase activity. Interacts with and phosphorylates l(2)gl and yrt. Interacts with crb and ref(2)P. Forms a complex with baz, fz and Patj. In terms of tissue distribution, expressed in the testis. In spermatid cysts, localizes near the tips of spermatid flagellar axonemes (at protein level). Detectable in freshly laid eggs before onset of zygotic transcription so is deposited in the egg during oogenesis. At the cellular blastoderm stage, present in all cells except the pole cells. During gastrulation, strongly expressed in tissues undergoing morphogenetic movements such as invaginating mesoderm, proctodeum and cephalic furrow. Strongly expressed in neuroblasts.

The protein resides in the cytoplasm. It localises to the cell cortex. It is found in the apicolateral cell membrane. The catalysed reaction is L-seryl-[protein] + ATP = O-phospho-L-seryl-[protein] + ADP + H(+). It carries out the reaction L-threonyl-[protein] + ATP = O-phospho-L-threonyl-[protein] + ADP + H(+). Functionally, serine/threonine protein kinase which is required for apico-basal cell polarity in the germ line as well as in epithelial and neural precursor cells, for epithelial planar cell polarity and for cell proliferation. During oocyte development, required for the posterior translocation of oocyte specification factors and for the posterior establishment of the microtubule organizing center within the presumptive oocyte. Phosphorylates l(2)gl which restricts l(2)gl activity to the oocyte posterior and regulates posterior enrichment of par-1, leading to establishment of correct oocyte polarity. Essential for apical localization of l(2)gl and par-6 in neuroblasts and for exclusion of mira from the apical cortex. Phosphorylates baz which is required for targeting of baz to the postsynaptic region where it is involved in actin organization, and for apical exclusion of baz which is necessary for establishment of the apical/lateral border in epithelial cells. Phosphorylates yrt which prevents its premature apical localization and is necessary for correct epithelial cell polarization. Required for the establishment of mitotic spindle orientation during symmetric division of epithelial cells and for apical exclusion of raps/Pins. Involved in symmetric adherens junction positioning during embryogenesis. Required for polarization of the spermatid cyst which is necessary for sperm differentiation. Required for stimulation of the Toll signaling pathway which activates Dif and dl and plays a role in innate immunity. Plays a role in memory enhancement. This Drosophila melanogaster (Fruit fly) protein is Atypical protein kinase C.